The primary structure comprises 158 residues: Cysteine-rich venom protein VAR7 (158 aa).

The first 22 residues, 1-22, serve as a signal peptide directing secretion; sequence MILLKLYLTLAAILCQSRGTTS. In terms of domain architecture, SCP spans 41–158; it reads NKHNDLRRTV…MGCAINLCPN (118 aa). A disulfide bridge links C77 with C156.

Belongs to the CRISP family. Post-translationally, contains 8 disulfide bonds. In terms of tissue distribution, expressed by the venom gland.

The protein resides in the secreted. Its function is as follows. Blocks ryanodine receptors, and potassium channels. The chain is Cysteine-rich venom protein VAR7 from Varanus acanthurus (Ridge-tailed monitor).